Reading from the N-terminus, the 183-residue chain is Regulatory protein RecX (183 aa).

Over residues 1–12 (MTSFPHPSTSES) the composition is skewed to polar residues. Residues 1–26 (MTSFPHPSTSESGPDPDSEPNREEQA) are disordered.

It belongs to the RecX family.

The protein localises to the cytoplasm. Functionally, modulates RecA activity. This chain is Regulatory protein RecX, found in Mycobacterium sp. (strain KMS).